The sequence spans 725 residues: N-alpha-acetyltransferase 35, NatC auxiliary subunit (725 aa).

A Phosphoserine modification is found at Ser187. Positions 548-573 are disordered; that stretch reads ERIMEEQQKGRSSKKTKKKKKVRPLS. The segment covering 558–571 has biased composition (basic residues); it reads RSSKKTKKKKKVRP.

This sequence belongs to the MAK10 family. Component of the N-terminal acetyltransferase C (NatC) complex, which is composed of NAA35, NAA38 and NAA30.

Its subcellular location is the cytoplasm. In terms of biological role, auxillary component of the N-terminal acetyltransferase C (NatC) complex which catalyzes acetylation of N-terminal methionine residues. N-terminal acetylation protects proteins from ubiquitination and degradation by the N-end rule pathway. Involved in regulation of apoptosis and proliferation of smooth muscle cells. The polypeptide is N-alpha-acetyltransferase 35, NatC auxiliary subunit (NAA35) (Macaca fascicularis (Crab-eating macaque)).